The primary structure comprises 134 residues: Profilin-2 (134 aa).

A disulfide bridge links Cys13 with Cys118. Residues 84–100 carry the Involved in PIP2 interaction motif; that stretch reads AVIRGKKGSGGITIKKT. Thr114 carries the post-translational modification Phosphothreonine.

Belongs to the profilin family. In terms of processing, phosphorylated by MAP kinases.

It is found in the cytoplasm. The protein resides in the cytoskeleton. The chain is Profilin-2 from Olea europaea (Common olive).